The sequence spans 728 residues: Lutropin-choriogonadotropic hormone receptor (728 aa).

The signal sequence occupies residues 1 to 19 (MLPALLPLLLPALLPGAGG). Over 20–389 (GRCPQRCACT…DILGYSFLRV (370 aa)) the chain is Extracellular. LRR repeat units lie at residues 92-116 (LPALSEILILNTKNLLHIEDGAFRN), 117-142 (LPRLKYLSICNTGIIEFPDLTQIFSS), 144-166 (AHFILELCDNLRMTTIPQNAFQG), 168-191 (SNESLTLKLYKNGFEDIHSHAFNG), 193-215 (KLNQLILKDNKNLRRIHNDALRG), and 216-239 (ATGPDVLDISSTALESLPSYGLEA). The helical transmembrane segment at 390–410 (LIWFINILALAGNFIVLLVLI) threads the bilayer. Residues 411-420 (TSHYKLTVPR) are Cytoplasmic-facing. Residues 421–441 (FLMCNLSFADFCMGLYLLLIA) form a helical membrane-spanning segment. Topologically, residues 442 to 466 (SVDAQTSGQYYNHAIDWQTGSGCST) are extracellular. The cysteines at positions 464 and 539 are disulfide-linked. A helical membrane pass occupies residues 467–487 (AGFFTVFASELSVYTLTVITI). The Cytoplasmic segment spans residues 488-507 (ERWHTITYAMQLDRKLRLRH). The chain crosses the membrane as a helical span at residues 508 to 528 (AVPIMLGGWVFSILIAVLPLL). Topologically, residues 529-551 (GVSSYMKVSICLPMDIETGLSQA) are extracellular. A helical transmembrane segment spans residues 552-572 (YILLILMLNVIAFLVICACYI). At 573–595 (KIYVAVQNPELVAANKDTKIAKR) the chain is on the cytoplasmic side. Residues 596–616 (MAILIFTDFTCMAPISFFAIS) traverse the membrane as a helical segment. The Extracellular segment spans residues 617–630 (AAIKVPLITVTNSK). A helical transmembrane segment spans residues 631-651 (ILLVLFYPVNSCANPFLYAIF). The Cytoplasmic portion of the chain corresponds to 652–728 (TKAFQRDFFL…STKKSQPECQ (77 aa)).

Belongs to the G-protein coupled receptor 1 family. FSH/LSH/TSH subfamily. As to expression, expressed in ovarian follicle granulosa cells. Expressed in ovarian follicle theca cells.

The protein localises to the cell membrane. In terms of biological role, receptor for lutropin-choriogonadotropic hormone. The activity of this receptor is mediated by G proteins which activate adenylate cyclase. This is Lutropin-choriogonadotropic hormone receptor from Gallus gallus (Chicken).